The chain runs to 757 residues: Elongation factor G, mitochondrial (757 aa).

The transit peptide at 1–41 directs the protein to the mitochondrion; sequence MLERAALLHRLRLPAHSLPFIYNGALFGGAKRSFSATSKRC. A tr-type G domain is found at 66-347; it reads KLLRNIGVSA…AIVDYLPEPS (282 aa). GTP contacts are provided by residues 75–82, 146–150, and 200–203; these read AHIDSGKT, DTPGH, and NKMD.

The protein belongs to the TRAFAC class translation factor GTPase superfamily. Classic translation factor GTPase family. EF-G/EF-2 subfamily.

The protein localises to the mitochondrion. It functions in the pathway protein biosynthesis; polypeptide chain elongation. Its function is as follows. Mitochondrial GTPase that catalyzes the GTP-dependent ribosomal translocation step during translation elongation. During this step, the ribosome changes from the pre-translocational (PRE) to the post-translocational (POST) state as the newly formed A-site-bound peptidyl-tRNA and P-site-bound deacylated tRNA move to the P and E sites, respectively. Catalyzes the coordinated movement of the two tRNA molecules, the mRNA and conformational changes in the ribosome. This is Elongation factor G, mitochondrial from Eremothecium gossypii (strain ATCC 10895 / CBS 109.51 / FGSC 9923 / NRRL Y-1056) (Yeast).